The following is a 383-amino-acid chain: Na(+)/H(+) antiporter NhaA (383 aa).

11 helical membrane passes run 14-34 (AGGILLVIAAAIAMTIANSPL), 47-67 (FGMSVSHWINDGLMAVFFLLI), 87-107 (IFPAIAAVGGMLAPALIYVAF), 117-137 (GWAIPAATDIAFALGIMALLG), 146-166 (VFLLALAIIDDLGVVVIIALF), 171-191 (LSSMALLVGFVMTGVLFMLNA), 205-225 (AILWFAVLKSGVHATLAGVVI), 252-272 (VAFGILPLFAFANAGISLEGV), 280-300 (MLPLGIALGLLIGKPLGIFSF), 321-341 (IFAVSVLCGIGFTMSIFISSL), and 356-376 (LGILMGSTTAAVLGYALLHFS).

It belongs to the NhaA Na(+)/H(+) (TC 2.A.33) antiporter family.

It is found in the cell inner membrane. The enzyme catalyses Na(+)(in) + 2 H(+)(out) = Na(+)(out) + 2 H(+)(in). It carries out the reaction Li(+)(in) + 2 H(+)(out) = Li(+)(out) + 2 H(+)(in). With respect to regulation, activity is regulated by pH. Active at alkaline pH. Amiloride strongly reduces affinity for Na(+), but does not change the Vmax. Its function is as follows. Na(+)/H(+) antiporter that extrudes sodium in exchange for external protons. Can also transport lithium and potassium. The protein is Na(+)/H(+) antiporter NhaA of Vibrio parahaemolyticus serotype O3:K6 (strain RIMD 2210633).